The chain runs to 692 residues: MFYLRGCGRWVAASFTKQQFPLVRLSSDSAAPRTPHFDVIVIGGGHAGTEAATAAARCGSRTLLLTHRVDTIGQMSCNPSFGGIGKGHLMREVDALDGLCSRICDQSGVHYKVLNRRKGPAVWGLRAQIDRKLYKQNMQKEILNTPLLTVQEGAVEDLILTEPEPEHTGKCRVSGVVLVDGSTVYAESVILTTGTFLRGMIVIGLEMHPAGRLGDQPSIGLAQTLEKLGFVVGRLKTGTPPRIAKDSINFSILNKQTPDNPSVPFSFTNETVWIKPEDQLPCYLTYTNPRVDEIVLNNLHLNSHVKETTRGPRYCPSIESKVLRFPNRLHQVWLEPEGMDSDLIYPQGLSMTLPTELQEKMITCIRGLEKAKVIQPGYGVQYDYLDPRQITPSLETHLVQRLFFAGQINGTTGYEEAAAQGVIAGINASLRVSRKPPFVVSRTEGYIGVLIDDLTTLGTSEPYRMFTSRVEFRLSLRPDNADIRLTLRGYKDAGCVSQQRYERACWMKSSLEEGISVLKSIEFSSSKWKNLIPEVSISTSRSLPVRALDVLKYEEVDMDSLAKAVPEPLKKYTKCRELAERLKIEATYESVLFHQLQEIKGVQQDEALQLPKDIDYLTIRDVSLSHEVREKLHFSRPQTIGAASRIPGVTPAAIINLLRFVKTTQQRQAAMNESPKTDQCLRNADRLQERQL.

A mitochondrion-targeting transit peptide spans 1-25; it reads MFYLRGCGRWVAASFTKQQFPLVRL. Residues 43-48, V155, S218, and Q407 each bind FAD; that span reads GGGHAG. K508 carries the post-translational modification N6-methyllysine. The interval 669-692 is disordered; the sequence is AAMNESPKTDQCLRNADRLQERQL. Over residues 683-692 the composition is skewed to basic and acidic residues; the sequence is NADRLQERQL.

Belongs to the MnmG family. Homodimer; forms a dimer in the presence of potassium. Interacts with GTPBP3; forms the GTPBP3-MTO1 complex composed of homodimers of GTPBP3 and MTO1. The cofactor is FAD.

The protein localises to the mitochondrion. It carries out the reaction 5,10-methylenetetrahydrofolate + uridine(34) in tRNA + taurine + GTP + A + H2O = 5-taurinomethyluridine(34) in tRNA + 7,8-dihydrofolate + GDP + AH2 + phosphate + H(+). Component of the GTPBP3-MTO1 complex that catalyzes the 5-taurinomethyluridine (taum(5)U) modification at the 34th wobble position (U34) of mitochondrial tRNAs (mt-tRNAs), which plays a role in mt-tRNA decoding and mitochondrial translation. Taum(5)U formation on mammalian mt-tRNA requires the presence of both GTPBP3-mediated GTPase activity and MTO1 catalytic activity. The sequence is that of 5-taurinomethyluridine-[tRNA] synthase subunit MTO1, mitochondrial (MTO1) from Macaca fascicularis (Crab-eating macaque).